The primary structure comprises 344 residues: Heat-inducible transcription repressor HrcA (344 aa).

It belongs to the HrcA family.

Its function is as follows. Negative regulator of class I heat shock genes (grpE-dnaK-dnaJ and groELS operons). Prevents heat-shock induction of these operons. This Streptococcus equi subsp. zooepidemicus (strain H70) protein is Heat-inducible transcription repressor HrcA.